The sequence spans 347 residues: Protein RecA (347 aa).

Position 67–74 (Gly-67–Thr-74) interacts with ATP.

Belongs to the RecA family.

It is found in the cytoplasm. Can catalyze the hydrolysis of ATP in the presence of single-stranded DNA, the ATP-dependent uptake of single-stranded DNA by duplex DNA, and the ATP-dependent hybridization of homologous single-stranded DNAs. It interacts with LexA causing its activation and leading to its autocatalytic cleavage. The chain is Protein RecA from Sulfurovum sp. (strain NBC37-1).